The sequence spans 308 residues: Reaction center protein M chain (308 aa).

A run of 3 helical transmembrane segments spans residues 54 to 80, 111 to 140, and 143 to 168; these read GSLGVLSLFSGLMWFFTIGIWFWYQAG, KEGGLWLIASFFMFVAVWSWWGRTYLRAQA, and MGKHTAWAFLSAIWLWMVLGFIRPIL. (7R,8Z)-bacteriochlorophyll b contacts are provided by histidine 183 and histidine 203. A helical transmembrane segment spans residues 198 to 226; it reads FYNPFHGLSIAFLYGSALLFAMHGATILA. Residues histidine 220 and glutamate 235 each contribute to the Fe cation site. Tryptophan 253 provides a ligand contact to a ubiquinone. Residues 260–286 form a helical membrane-spanning segment; sequence NATMEGIHRWAIWMAVLVTLTGGIGIL. Histidine 267 lines the Fe cation pocket.

The protein belongs to the reaction center PufL/M/PsbA/D family. In terms of assembly, reaction center is composed of four bacteriochlorophylls, two bacteriopheophytins, two ubiquinones, one iron, and three highly hydrophobic polypeptide chains (designated L, M, and H).

It is found in the cellular chromatophore membrane. The reaction center is a membrane-bound complex that mediates the initial photochemical event in the electron transfer process of photosynthesis. This chain is Reaction center protein M chain (pufM), found in Cereibacter sphaeroides (strain ATCC 17023 / DSM 158 / JCM 6121 / CCUG 31486 / LMG 2827 / NBRC 12203 / NCIMB 8253 / ATH 2.4.1.) (Rhodobacter sphaeroides).